The sequence spans 1026 residues: Adenylate-forming reductase 06235 (1026 aa).

The adenylation (A) domain stretch occupies residues 37–422 (FEFHAKANPD…LGRIDNQVKI (386 aa)). Residues 332–333 (VT) and 412–415 (HLGR) each bind AMP. The segment at 556–638 (SLVSTVGSTV…ALFIWILVTK (83 aa)) is thiolation and peptide carrier (T) domain. The segment at 682–901 (CIRRVCARIY…PPTKMWVKGV (220 aa)) is reductase (R) domain. Residues 685–688 (RVCA), 769–771 (TAL), and tyrosine 840 contribute to the NADP(+) site.

This sequence belongs to the adenylate-forming reductase family.

Its function is as follows. Adenylate-forming reductase, a natural product biosynthesis enzyme that resembles non-ribosomal peptide synthetases, yet serves to modify one substrate, rather than to condense two or more building blocks. The A-domain preferentially accepts L-serine, L-alanine and L-valine as substrates. The natural product of the enzyme is not yet known. The protein is Adenylate-forming reductase 06235 of Coprinopsis cinerea (strain Okayama-7 / 130 / ATCC MYA-4618 / FGSC 9003) (Inky cap fungus).